A 345-amino-acid chain; its full sequence is Uroporphyrinogen decarboxylase (345 aa).

Residues 27–31 (RQAGR), Asp77, Tyr152, Ser207, and His323 each bind substrate.

The protein belongs to the uroporphyrinogen decarboxylase family. As to quaternary structure, homodimer.

It localises to the cytoplasm. It carries out the reaction uroporphyrinogen III + 4 H(+) = coproporphyrinogen III + 4 CO2. It functions in the pathway porphyrin-containing compound metabolism; protoporphyrin-IX biosynthesis; coproporphyrinogen-III from 5-aminolevulinate: step 4/4. In terms of biological role, catalyzes the decarboxylation of four acetate groups of uroporphyrinogen-III to yield coproporphyrinogen-III. The protein is Uroporphyrinogen decarboxylase of Maricaulis maris (strain MCS10) (Caulobacter maris).